The following is a 224-amino-acid chain: MMTNLFSVFDPSAIFNLSLNWLSTFLGLLMIPSIYWLMPSRYNIVWNSILLTLHKEFKTLLGPSGHNGSTFIFISLFSLILFNNFMGLFPYIFTSTSHLTLTLSLALPLWLCFMLYGWINHTQHMFAHLVPQGTPAVLMPFMVCIETISNIIRPGTLAVRLTANMIAGHLLLTLLGNTGPSMSYLLVTFLLTAQIALLVLESAVAMIQSYVFAVLSTLYSSEVN.

Helical transmembrane passes span 17–37, 72–92, 99–119, 125–145, 170–190, and 195–215; these read LSLNWLSTFLGLLMIPSIYWL, IFISLFSLILFNNFMGLFPYI, LTLTLSLALPLWLCFMLYGWI, MFAHLVPQGTPAVLMPFMVCI, LLLTLLGNTGPSMSYLLVTFL, and IALLVLESAVAMIQSYVFAVL.

Belongs to the ATPase A chain family. F-type ATPases have 2 components, CF(1) - the catalytic core - and CF(0) - the membrane proton channel. CF(1) has five subunits: alpha(3), beta(3), gamma(1), delta(1), epsilon(1). CF(0) has three main subunits: a, b and c.

Its subcellular location is the mitochondrion inner membrane. Its function is as follows. Mitochondrial membrane ATP synthase (F(1)F(0) ATP synthase or Complex V) produces ATP from ADP in the presence of a proton gradient across the membrane which is generated by electron transport complexes of the respiratory chain. F-type ATPases consist of two structural domains, F(1) - containing the extramembraneous catalytic core and F(0) - containing the membrane proton channel, linked together by a central stalk and a peripheral stalk. During catalysis, ATP synthesis in the catalytic domain of F(1) is coupled via a rotary mechanism of the central stalk subunits to proton translocation. Key component of the proton channel; it may play a direct role in the translocation of protons across the membrane. This is ATP synthase subunit a (mt:ATPase6) from Drosophila mauritiana (Fruit fly).